The chain runs to 151 residues: Endoribonuclease YbeY (151 aa).

Zn(2+) contacts are provided by H117, H121, and H127.

Belongs to the endoribonuclease YbeY family. Zn(2+) serves as cofactor.

Its subcellular location is the cytoplasm. Single strand-specific metallo-endoribonuclease involved in late-stage 70S ribosome quality control and in maturation of the 3' terminus of the 16S rRNA. This Alkaliphilus oremlandii (strain OhILAs) (Clostridium oremlandii (strain OhILAs)) protein is Endoribonuclease YbeY.